We begin with the raw amino-acid sequence, 774 residues long: C6 finger domain transcription factor nscR (774 aa).

Positions 17–43 (CELCRERKIKCDKVDPCNNCVSAGVVC) form a DNA-binding region, zn(2)-C6 fungal-type. Disordered stretches follow at residues 61 to 94 (RPMSPTFVPPRAPTPVAGPVPSEKKQTDHSSGAV), 536 to 559 (LQLPQPSNGSSQPPSSPSPRPQEH), and 665 to 697 (PTFSLGSSTGTSAAPTPRSRASSTPSDTLSDLS). Pro residues predominate over residues 67–78 (FVPPRAPTPVAG). Residues 536-548 (LQLPQPSNGSSQP) show a composition bias toward low complexity. Positions 665–674 (PTFSLGSSTG) are enriched in polar residues. Over residues 675–697 (TSAAPTPRSRASSTPSDTLSDLS) the composition is skewed to low complexity.

The protein localises to the nucleus. Functionally, transcription factor that specifically regulates the neosartoricin biosynthesis gene cluster. This Aspergillus fumigatus (strain ATCC MYA-4609 / CBS 101355 / FGSC A1100 / Af293) (Neosartorya fumigata) protein is C6 finger domain transcription factor nscR.